The sequence spans 635 residues: 1-deoxy-D-xylulose-5-phosphate synthase (635 aa).

Thiamine diphosphate is bound by residues H72 and 113–115 (GHA). D144 contributes to the Mg(2+) binding site. Thiamine diphosphate is bound by residues 145-146 (GA), N174, Y286, and E369. N174 is a binding site for Mg(2+).

It belongs to the transketolase family. DXPS subfamily. As to quaternary structure, homodimer. The cofactor is Mg(2+). Requires thiamine diphosphate as cofactor.

The enzyme catalyses D-glyceraldehyde 3-phosphate + pyruvate + H(+) = 1-deoxy-D-xylulose 5-phosphate + CO2. Its pathway is metabolic intermediate biosynthesis; 1-deoxy-D-xylulose 5-phosphate biosynthesis; 1-deoxy-D-xylulose 5-phosphate from D-glyceraldehyde 3-phosphate and pyruvate: step 1/1. Its function is as follows. Catalyzes the acyloin condensation reaction between C atoms 2 and 3 of pyruvate and glyceraldehyde 3-phosphate to yield 1-deoxy-D-xylulose-5-phosphate (DXP). This Gloeothece citriformis (strain PCC 7424) (Cyanothece sp. (strain PCC 7424)) protein is 1-deoxy-D-xylulose-5-phosphate synthase.